The following is a 248-amino-acid chain: Large ribosomal subunit protein uL29m (248 aa).

2 disordered regions span residues 77–107 and 223–248; these read VSKY…GFFG and AYEP…PPSS.

Belongs to the universal ribosomal protein uL29 family. Component of the mitochondrial large ribosomal subunit. Mature mitochondrial ribosomes consist of a small (37S) and a large (54S) subunit. The 37S subunit contains at least 33 different proteins and 1 molecule of RNA (15S). The 54S subunit contains at least 45 different proteins and 1 molecule of RNA (21S).

The protein localises to the mitochondrion. The chain is Large ribosomal subunit protein uL29m (MRPL4) from Ajellomyces capsulatus (strain NAm1 / WU24) (Darling's disease fungus).